The following is a 170-amino-acid chain: Tachykinin-4 (170 aa).

The N-terminal stretch at 1 to 16 (MLPLLALFLLIGPAVS) is a signal peptide. A propeptide spanning residues 17-54 (TTTRDREDLTFGAEAESWVTVNLKGIPVPSIELKLQEL) is cleaved from the precursor. The residue at position 66 (Met66) is a Methionine amide. Residues 67-170 (GKRVEGVHPI…SQMMPRPSRP (104 aa)) constitute a propeptide that is removed on maturation. Residues 107 to 170 (QETNHQSAGP…SQMMPRPSRP (64 aa)) form a disordered region. Positions 123 to 140 (SLQSQRGRSEPPNHQQHV) are enriched in polar residues.

Belongs to the tachykinin family.

The protein localises to the secreted. Tachykinins are active peptides which excite neurons, evoke behavioral responses, are potent vasodilators and secretagogues, and contract (directly or indirectly) many smooth muscles. Hemokinin induces plasma extravasation, mast cell degranulation, muscle contraction, salivary secretion and scratching behavior. Increases sperm motility. Induces potent analgesic effects and may play a role in pain modulation. Promotes survival of bone marrow B lineage cells and of cultured LPS-stimulated pre-B cells and may act as an autocrine factor required for B-cell survival and proliferation. Lowers systemic arterial pressure following intravenous injection. Induces interferon-gamma production and may play a role in the inflammatory response. Shows potent affinity and specificity for the NK-1 receptor. This is Tachykinin-4 from Rattus norvegicus (Rat).